The chain runs to 118 residues: Small ribosomal subunit protein uS13 (118 aa).

The segment at Ser94 to Lys118 is disordered.

The protein belongs to the universal ribosomal protein uS13 family. In terms of assembly, part of the 30S ribosomal subunit. Forms a loose heterodimer with protein S19. Forms two bridges to the 50S subunit in the 70S ribosome.

In terms of biological role, located at the top of the head of the 30S subunit, it contacts several helices of the 16S rRNA. In the 70S ribosome it contacts the 23S rRNA (bridge B1a) and protein L5 of the 50S subunit (bridge B1b), connecting the 2 subunits; these bridges are implicated in subunit movement. Contacts the tRNAs in the A and P-sites. The sequence is that of Small ribosomal subunit protein uS13 from Shewanella violacea (strain JCM 10179 / CIP 106290 / LMG 19151 / DSS12).